Reading from the N-terminus, the 99-residue chain is Small integral membrane protein 14 (99 aa).

Topologically, residues 1 to 49 (MAEGGFDPCECVCSHEHAMRRLINLLRQSQSYCTDTECLQELPGPSSDN) are lumenal. Residues 50–70 (GISITMILMAWMVIAVILFLL) form a helical membrane-spanning segment. Residues 71–99 (RPPNLRGSNLTGKPASPHNGQDPPAPPVD) lie on the Cytoplasmic side of the membrane. Residues 78 to 99 (SNLTGKPASPHNGQDPPAPPVD) are disordered.

It localises to the endoplasmic reticulum membrane. In Bos taurus (Bovine), this protein is Small integral membrane protein 14 (SMIM14).